The chain runs to 309 residues: 4-hydroxy-3-methylbut-2-enyl diphosphate reductase (309 aa).

Residue C12 coordinates [4Fe-4S] cluster. H41 and H74 together coordinate (2E)-4-hydroxy-3-methylbut-2-enyl diphosphate. Residues H41 and H74 each contribute to the dimethylallyl diphosphate site. Isopentenyl diphosphate contacts are provided by H41 and H74. C96 contacts [4Fe-4S] cluster. H124 contacts (2E)-4-hydroxy-3-methylbut-2-enyl diphosphate. H124 contributes to the dimethylallyl diphosphate binding site. Position 124 (H124) interacts with isopentenyl diphosphate. E126 functions as the Proton donor in the catalytic mechanism. T167 provides a ligand contact to (2E)-4-hydroxy-3-methylbut-2-enyl diphosphate. Residue C197 participates in [4Fe-4S] cluster binding. Residues S225, S226, N227, and S269 each contribute to the (2E)-4-hydroxy-3-methylbut-2-enyl diphosphate site. Residues S225, S226, N227, and S269 each coordinate dimethylallyl diphosphate. 4 residues coordinate isopentenyl diphosphate: S225, S226, N227, and S269.

This sequence belongs to the IspH family. [4Fe-4S] cluster serves as cofactor.

It carries out the reaction isopentenyl diphosphate + 2 oxidized [2Fe-2S]-[ferredoxin] + H2O = (2E)-4-hydroxy-3-methylbut-2-enyl diphosphate + 2 reduced [2Fe-2S]-[ferredoxin] + 2 H(+). The catalysed reaction is dimethylallyl diphosphate + 2 oxidized [2Fe-2S]-[ferredoxin] + H2O = (2E)-4-hydroxy-3-methylbut-2-enyl diphosphate + 2 reduced [2Fe-2S]-[ferredoxin] + 2 H(+). It functions in the pathway isoprenoid biosynthesis; dimethylallyl diphosphate biosynthesis; dimethylallyl diphosphate from (2E)-4-hydroxy-3-methylbutenyl diphosphate: step 1/1. It participates in isoprenoid biosynthesis; isopentenyl diphosphate biosynthesis via DXP pathway; isopentenyl diphosphate from 1-deoxy-D-xylulose 5-phosphate: step 6/6. Functionally, catalyzes the conversion of 1-hydroxy-2-methyl-2-(E)-butenyl 4-diphosphate (HMBPP) into a mixture of isopentenyl diphosphate (IPP) and dimethylallyl diphosphate (DMAPP). Acts in the terminal step of the DOXP/MEP pathway for isoprenoid precursor biosynthesis. This Shewanella halifaxensis (strain HAW-EB4) protein is 4-hydroxy-3-methylbut-2-enyl diphosphate reductase.